The following is a 411-amino-acid chain: Allantoate amidohydrolase (411 aa).

Residues H81, D92, E127, and H190 each contribute to the Zn(2+) site. The allantoate site is built by R215, N275, and R288. H382 provides a ligand contact to Zn(2+).

The protein belongs to the peptidase M20 family. In terms of assembly, homodimer. It depends on Zn(2+) as a cofactor.

Its subcellular location is the cytoplasm. It catalyses the reaction allantoate + H2O + 2 H(+) = (S)-2-ureidoglycine + NH4(+) + CO2. It participates in nitrogen metabolism; (S)-allantoin degradation. With respect to regulation, sulfate could be an allosteric effector of the enzyme that is responsible for stabilizing substrate binding. In addition, this anion effector may act as a counterion during enzyme-mediated catalysis. Functionally, involved in the anaerobic nitrogen utilization via the assimilation of allantoin. Catalyzes specifically the hydrolysis of allantoate to yield CO2, NH3 and S-ureidoglycine, which is unstable and readily undergoes a second deamination by S-ureidoglycine aminohydrolase AllE to yield S-ureidoglycolate and NH3. In vivo, the spontaneous release of S-ureidoglycolate and ammonia from S-ureidoglycine appears to be too slow to sustain an efficient flux of nitrogen. This is Allantoate amidohydrolase from Escherichia coli (strain K12).